A 325-amino-acid chain; its full sequence is MWKYGQNQGNQGPAGGGGGAPNMMPMGGFMQGGGGMQGGGGMQHGNMPQMHMTPQQQQQQQQMNMMGGPGGMQMNPNAVGPTGLMPGMSPQHQMQQQQQMMQGVPMSMPPQQAMQQQMMGPQQGLGMGGSSGPQQQQQLQQQQQQSNLQQQQQQHNVGSGGAPGAGGVGNNMLAISQPNPHKEINIVQLSRLGQETVQDIASRFQEVFSALKNIQPTSHRDNNTEKKVQEYFRTIRLLFKRVRIIYDKCNDAVMDYMNAESLIPYKDEPEPRIETSQCDEYRKVLQENHEYIETVKLKNRQLREIIDRTRIIIWEINTMLAMRRS.

Composition is skewed to low complexity over residues 1 to 11, 109 to 122, and 132 to 154; these read MWKYGQNQGNQ, PPQQ…MGPQ, and GPQQ…QQQQ. Disordered regions lie at residues 1 to 26 and 109 to 176; these read MWKY…MMPM and PPQQ…LAIS. Residues 158-169 show a composition bias toward gly residues; it reads GSGGAPGAGGVG.

Belongs to the Mediator complex subunit 30 family. As to quaternary structure, component of the Mediator complex.

Its subcellular location is the nucleus. Its function is as follows. Component of the Mediator complex, a coactivator involved in the regulated transcription of nearly all RNA polymerase II-dependent genes. Mediator functions as a bridge to convey information from gene-specific regulatory proteins to the basal RNA polymerase II transcription machinery. Mediator is recruited to promoters by direct interactions with regulatory proteins and serves as a scaffold for the assembly of a functional preinitiation complex with RNA polymerase II and the general transcription factors. This chain is Mediator of RNA polymerase II transcription subunit 30 (MED30), found in Drosophila pseudoobscura pseudoobscura (Fruit fly).